A 122-amino-acid chain; its full sequence is Large ribosomal subunit protein uL14 (122 aa).

It belongs to the universal ribosomal protein uL14 family. As to quaternary structure, part of the 50S ribosomal subunit. Forms a cluster with proteins L3 and L19. In the 70S ribosome, L14 and L19 interact and together make contacts with the 16S rRNA in bridges B5 and B8.

In terms of biological role, binds to 23S rRNA. Forms part of two intersubunit bridges in the 70S ribosome. The sequence is that of Large ribosomal subunit protein uL14 from Alkaliphilus oremlandii (strain OhILAs) (Clostridium oremlandii (strain OhILAs)).